Consider the following 150-residue polypeptide: Large ribosomal subunit protein uL11 (150 aa).

It belongs to the universal ribosomal protein uL11 family. Part of the ribosomal stalk of the 50S ribosomal subunit. Interacts with L10 and the large rRNA to form the base of the stalk. L10 forms an elongated spine to which L12 dimers bind in a sequential fashion forming a multimeric L10(L12)X complex. Post-translationally, one or more lysine residues are methylated.

Forms part of the ribosomal stalk which helps the ribosome interact with GTP-bound translation factors. The protein is Large ribosomal subunit protein uL11 of Cereibacter sphaeroides (strain KD131 / KCTC 12085) (Rhodobacter sphaeroides).